Consider the following 1460-residue polypeptide: MFSFVDLRLLLLLAATALLTHGQEEGQEEDIPPVTCVQNGLRYYDRDVWKPEACRICVCDNGNVLCDDVICDETKNCPGAQVPPGECCPVCPDGEASPTDQETTGVEGPKGDTGPRGPRGPAGPPGRDGIPGQPGLPGPPGPPGPPGPPGLGGNFAPQMSYGYDEKSTGGISVPGPMGPSGPRGLPGPPGAPGPQGFQGPPGEPGEPGASGPMGPRGPPGPPGKNGDDGEAGKPGRPGERGPPGPQGARGLPGTAGLPGMKGHRGFSGLDGAKGDAGPAGPKGEPGSPGENGAPGQMGPRGLPGERGRPGAPGPAGARGNDGATGAAGPPGPTGPAGPPGFPGAVGAKGEAGPQGARGSEGPQGVRGEPGPPGPAGAAGPAGNPGADGQPGAKGANGAPGIAGAPGFPGARGPSGPQGPSGPPGPKGNSGEPGAPGNKGDTGAKGEPGPTGIQGPPGPAGEEGKRGARGEPGPTGLPGPPGERGGPGSRGFPGADGVAGPKGPAGERGSPGPAGPKGSPGEAGRPGEAGLPGAKGLTGSPGSPGPDGKTGPPGPAGQDGRPGPPGPPGARGQAGVMGFPGPKGAAGEPGKAGERGVPGPPGAVGPAGKDGEAGAQGPPGPAGPAGERGEQGPAGSPGFQGLPGPAGPPGEAGKPGEQGVPGDLGAPGPSGARGERGFPGERGVQGPPGPAGPRGANGAPGNDGAKGDAGAPGAPGSQGAPGLQGMPGERGAAGLPGPKGDRGDAGPKGADGSPGKDGVRGLTGPIGPPGPAGAPGDKGEAGPSGPAGPTGARGAPGDRGEPGPPGPAGFAGPPGADGQPGAKGEPGDAGAKGDAGPPGPAGPTGPPGPIGNVGAPGPKGARGSAGPPGATGFPGAAGRVGPPGPSGNAGPPGPPGPAGKEGGKGARGETGPAGRPGEVGPPGPPGPAGEKGSPGADGPAGAPGTPGPQGIAGQRGVVGLPGQRGERGFPGLPGPSGEPGKQGPSGTSGERGPPGPMGPPGLAGPPGESGREGSPGAEGSPGRDGSPGPKGDRGETGPAGPPGAPGAPGAPGPVGPAGKNGDRGETGPAGPAGPIGPVGARGPAGPQGPRGDKGETGEQGDRGIKGHRGFSGLQGPPGPPGSPGEQGPSGASGPAGPRGPPGSAGSPGKDGLNGLPGPIGPPGPRGRTGDAGPVGPPGPPGPPGPPGPPSGGFDFSFLPQPPQEKAHDGGRYYRADDANVVRDRDLEVDTTLKSLSQQIENIRSPEGSRKNPARTCRDLKMCHSDWKSGEYWIDPNQGCNLDAIKVFCNMETGETCVYPTQPQVAQKNWYISKNPKEKRHVWYGESMTDGFQFEYGGQGSDPADVAIQLTFLRLMSTEASQNITYHCKNSVAYMDQQTGNLKKALLLQGSNEIEIRAEGNSRFTYSVTYDGCTSHTGAWGKTVIEYKTTKTSRLPIIDVAPLDVGAPDQEFGMDIGPVCFL.

The signal sequence occupies residues 1 to 22; the sequence is MFSFVDLRLLLLLAATALLTHG. Residues 23-157 constitute a propeptide, N-terminal propeptide; sequence QEEGQEEDIP…PPGLGGNFAP (135 aa). The VWFC domain occupies 34 to 92; sequence VTCVQNGLRYYDRDVWKPEACRICVCDNGNVLCDDVICDETKNCPGAQVPPGECCPVCP. The disordered stretch occupies residues 96–1213; that stretch reads ASPTDQETTG…KAHDGGRYYR (1118 aa). Positions 134 to 149 are enriched in pro residues; the sequence is PGLPGPPGPPGPPGPP. The interval 158–174 is nonhelical region (N-terminal); it reads QMSYGYDEKSTGGISVP. Allysine is present on K166. The residue at position 167 (S167) is a Phosphoserine. A triple-helical region region spans residues 175–1188; sequence GPMGPSGPRG…PGPPGPPGPP (1014 aa). Residues P186, P189, P192, P201, P204, P207, P222, P237, P243, P252, and P258 each carry the 4-hydroxyproline modification. Over residues 194-213 the composition is skewed to low complexity; it reads PQGFQGPPGEPGEPGASGPM. A compositionally biased stretch (basic and acidic residues) spans 225-239; it reads NGDDGEAGKPGRPGE. K261 bears the 5-hydroxylysine; alternate mark. O-linked (Gal...) hydroxylysine; alternate glycosylation is present at K261. S267 carries the post-translational modification Phosphoserine. Over residues 275–291 the composition is skewed to low complexity; it reads DAGPAGPKGEPGSPGEN. 4-hydroxyproline occurs at positions 285, 288, 294, 303, and 309. The segment covering 314-327 has biased composition (low complexity); the sequence is PAGARGNDGATGAA. Positions 329–341 are enriched in pro residues; it reads PPGPTGPAGPPGF. Residues P330, P339, P342, P369, P372, P384, P390, P399, P405, P408, and P423 each carry the 4-hydroxyproline modification. Positions 375-414 are enriched in low complexity; sequence AGAAGPAGNPGADGQPGAKGANGAPGIAGAPGFPGARGPS. K426 is subject to 5-hydroxylysine. 4-hydroxyproline occurs at positions 432, 435, 447, 456, 471, 477, 486, and 492. The span at 481–490 shows a compositional bias: gly residues; sequence GERGGPGSRG. K501 carries the post-translational modification 5-hydroxylysine. Residues P510, P519, P525, P531, P540, P543, P552, P561, P567, P579, P588, P597, P600, P618, P636, P642, P648, P654, P660, P666, P678, P687, P699, P711, P714, P720, P726, and P735 each carry the 4-hydroxyproline modification. A compositionally biased stretch (low complexity) spans 534 to 560; the sequence is KGLTGSPGSPGPDGKTGPPGPAGQDGR. The segment covering 569 to 588 has biased composition (low complexity); it reads ARGQAGVMGFPGPKGAAGEP. Residues 630 to 657 show a composition bias toward low complexity; that stretch reads QGPAGSPGFQGLPGPAGPPGEAGKPGEQ. The segment covering 692 to 720 has biased composition (low complexity); that stretch reads PRGANGAPGNDGAKGDAGAPGAPGSQGAP. A Cell attachment site motif is present at residues 741 to 743; it reads RGD. The residue at position 747 (K747) is a 5-hydroxylysine. A 4-hydroxyproline mark is found at P753, P768, and P774. The segment covering 780-794 has biased composition (low complexity); it reads AGPSGPAGPTGARGA. S783 is subject to Phosphoserine. 4-hydroxyproline occurs at positions 795, 801, 804, 813, 819, 837, 846, and 855. The span at 807–834 shows a compositional bias: low complexity; sequence AGFAGPPGADGQPGAKGEPGDAGAKGDA. Residues 836–848 are compositionally biased toward pro residues; sequence PPGPAGPTGPPGP. K858 is modified (5-hydroxylysine). Over residues 863 to 879 the composition is skewed to low complexity; it reads SAGPPGATGFPGAAGRV. 2 positions are modified to 4-hydroxyproline: P867 and P873. The residue at position 881 (P881) is a 3-hydroxyproline. P882, P891, P894, P915, P924, P933, P942, P960, P969, P972, P978, P993, P999, P1005, P1014, and P1020 each carry 4-hydroxyproline. Low complexity predominate over residues 908 to 917; the sequence is ETGPAGRPGE. Residues 927-951 show a composition bias toward low complexity; the sequence is AGEKGSPGADGPAGAPGTPGPQGIA. Positions 992 to 1002 are enriched in pro residues; sequence PPGPMGPPGLA. Positions 1004-1019 are enriched in low complexity; sequence PPGESGREGSPGAEGS. K1029 bears the 5-hydroxylysine mark. Over residues 1038-1053 the composition is skewed to pro residues; it reads AGPPGAPGAPGAPGPV. 4-hydroxyproline occurs at positions 1041, 1044, and 1047. Residues 1074–1088 are compositionally biased toward low complexity; that stretch reads IGPVGARGPAGPQGP. A Cell attachment site motif is present at residues 1089–1091; it reads RGD. Basic and acidic residues predominate over residues 1089-1103; the sequence is RGDKGETGEQGDRGI. K1092 is subject to 5-hydroxylysine. 5-hydroxylysine; alternate is present on K1104. An O-linked (Gal...) hydroxylysine; alternate glycan is attached at K1104. 5 positions are modified to 4-hydroxyproline: P1116, P1119, P1122, P1140, and P1155. Residues 1122–1155 show a composition bias toward low complexity; it reads PGEQGPSGASGPAGPRGPPGSAGSPGKDGLNGLP. P1160 carries the post-translational modification 3-hydroxyproline. At P1161 the chain carries 4-hydroxyproline. Residues 1173-1188 show a composition bias toward pro residues; that stretch reads VGPPGPPGPPGPPGPP. A 3-hydroxyproline modification is found at P1175. 4-hydroxyproline is present on P1176. P1178 is subject to 3-hydroxyproline. P1179 is modified (4-hydroxyproline). P1181 carries the post-translational modification 3-hydroxyproline. 4-hydroxyproline occurs at positions 1182, 1185, and 1188. Positions 1189–1214 are nonhelical region (C-terminal); the sequence is SGGFDFSFLPQPPQEKAHDGGRYYRA. Basic and acidic residues predominate over residues 1203-1213; it reads EKAHDGGRYYR. K1204 carries the post-translational modification Allysine. A propeptide spans 1215 to 1460 (C-terminal propeptide); that stretch reads DDANVVRDRD…GMDIGPVCFL (246 aa). The region spanning 1225–1460 is the Fibrillar collagen NC1 domain; the sequence is LEVDTTLKSL…GMDIGPVCFL (236 aa). Disulfide bonds link C1255/C1287, C1295/C1458, and C1366/C1411. 5 residues coordinate Ca(2+): D1273, N1275, Q1276, C1278, and D1281. N-linked (GlcNAc...) asparagine glycosylation occurs at N1361.

This sequence belongs to the fibrillar collagen family. In terms of assembly, trimers of one alpha 2(I) and two alpha 1(I) chains. Interacts with MRC2. Interacts with TRAM2. Interacts with MFAP4 in a Ca (2+)-dependent manner. In terms of processing, contains mostly 4-hydroxyproline. Proline residues at the third position of the tripeptide repeating unit (G-X-Y) are hydroxylated in some or all of the chains. Contains 3-hydroxyproline at a few sites. This modification occurs on the first proline residue in the sequence motif Gly-Pro-Hyp, where Hyp is 4-hydroxyproline. Post-translationally, lysine residues at the third position of the tripeptide repeating unit (G-X-Y) are 5-hydroxylated in some or all of the chains. In terms of processing, O-glycosylated on hydroxylated lysine residues. The O-linked glycan consists of a Glc-Gal disaccharide.

The protein resides in the secreted. Its subcellular location is the extracellular space. It localises to the extracellular matrix. In terms of biological role, type I collagen is a member of group I collagen (fibrillar forming collagen). This chain is Collagen alpha-1(I) chain (COL1A1), found in Canis lupus familiaris (Dog).